Consider the following 293-residue polypeptide: 4-diphosphocytidyl-2-C-methyl-D-erythritol kinase (293 aa).

Lysine 16 is a catalytic residue. 99–109 (PMGAGLGGGSS) contacts ATP. Aspartate 141 is an active-site residue.

It belongs to the GHMP kinase family. IspE subfamily.

The catalysed reaction is 4-CDP-2-C-methyl-D-erythritol + ATP = 4-CDP-2-C-methyl-D-erythritol 2-phosphate + ADP + H(+). It participates in isoprenoid biosynthesis; isopentenyl diphosphate biosynthesis via DXP pathway; isopentenyl diphosphate from 1-deoxy-D-xylulose 5-phosphate: step 3/6. Catalyzes the phosphorylation of the position 2 hydroxy group of 4-diphosphocytidyl-2C-methyl-D-erythritol. In Burkholderia pseudomallei (strain 668), this protein is 4-diphosphocytidyl-2-C-methyl-D-erythritol kinase.